Here is a 256-residue protein sequence, read N- to C-terminus: Probable elongation factor 1-delta (256 aa).

Residues S37, S53, and S89 each carry the phosphoserine modification. The interval 110–146 is disordered; sequence NGVSKEPEVEAKKPEANDDDDDVDLFGSDSEEEDGEA. Residues 114-125 show a composition bias toward basic and acidic residues; the sequence is KEPEVEAKKPEA. The segment covering 126–144 has biased composition (acidic residues); that stretch reads NDDDDDVDLFGSDSEEEDG. Phosphoserine is present on residues S137 and S139.

The protein belongs to the EF-1-beta/EF-1-delta family. In terms of assembly, EF-1 is composed of 4 subunits: alpha, beta, delta, and gamma.

Its function is as follows. EF-1-beta and EF-1-delta stimulate the exchange of GDP bound to EF-1-alpha to GTP. The chain is Probable elongation factor 1-delta (eEF1delta) from Drosophila melanogaster (Fruit fly).